The chain runs to 327 residues: uncharacterized protein (327 aa).

2 disordered regions span residues 127-170 (LSEF…GIYR) and 298-327 (NFED…LKRR). 3 positions are modified to phosphoserine: serine 153, serine 154, and serine 309. Residues 317 to 327 (YRKRKKNLKRR) show a composition bias toward basic residues.

This is an uncharacterized protein from Schizosaccharomyces pombe (strain 972 / ATCC 24843) (Fission yeast).